An 846-amino-acid polypeptide reads, in one-letter code: Interleukin cytokine receptor-related protein 1 (846 aa).

Positions 1–25 (MFLHSPALLIWLFLFCLAGPQAVRT) are cleaved as a signal peptide. Topologically, residues 26–418 (EPYNSTSSSS…KEDTTWTWHT (393 aa)) are extracellular. 6 N-linked (GlcNAc...) asparagine glycosylation sites follow: Asn29, Asn79, Asn186, Asn214, Asn339, and Asn395. Positions 388–409 (EKPPATSNQTEESDGKAEKDKK) are disordered. A compositionally biased stretch (basic and acidic residues) spans 400–409 (SDGKAEKDKK). A helical membrane pass occupies residues 419-439 (YAITGGAIIAILFILSVCAGL). Residues 440-846 (KCYKKFNNKK…AFHDEVIGIH (407 aa)) lie on the Cytoplasmic side of the membrane. Residues 476-618 (SISVLIVYSH…IPNSLMTMTT (143 aa)) form the SEFIR domain. Residues 737–771 (GPIHVEPTEPEVLEPAEEPMEEAEEDEEDEDDVDS) form a disordered region. The span at 744-771 (TEPEVLEPAEEPMEEAEEDEEDEDDVDS) shows a compositional bias: acidic residues.

As to quaternary structure, component of a heterodimeric receptor complex composed of ilcr-1 and ilcr-2. The receptor complex interacts with actl-1 and ilc-17.1 with the interaction being mediated by ilcr-2. Expressed in most neurons.

The protein localises to the cell membrane. Forms a receptor complex together with receptor ilcr-2, which upon activation acts as a modulator of neuronal activity. Binding of the ligand ilc-17.1 to the ilcr-1/2 receptor complex triggers a signaling cascade that activates the downstream signaling components actl-1, pik-1 and nfki-1, and results in increased neuronal activity in RMG interneurons in response to input from oxygen-sensing neurons. This leads to increased animal movement and promotes aggregation behavior. The chain is Interleukin cytokine receptor-related protein 1 from Caenorhabditis elegans.